A 227-amino-acid polypeptide reads, in one-letter code: UPF0173 metal-dependent hydrolase SSO0099 (227 aa).

The protein belongs to the UPF0173 family.

In Saccharolobus solfataricus (strain ATCC 35092 / DSM 1617 / JCM 11322 / P2) (Sulfolobus solfataricus), this protein is UPF0173 metal-dependent hydrolase SSO0099.